A 200-amino-acid polypeptide reads, in one-letter code: Dual-action ribosomal maturation protein DarP (200 aa).

Disordered stretches follow at residues 1–25 (MTRK…DRPS) and 177–200 (TASG…DDEA). Basic and acidic residues predominate over residues 12–25 (HAAEVDDNGYDRPS). A compositionally biased stretch (acidic residues) spans 184-200 (GDDEAADEAGDDHDDEA).

The protein belongs to the DarP family.

It localises to the cytoplasm. Member of a network of 50S ribosomal subunit biogenesis factors which assembles along the 30S-50S interface, preventing incorrect 23S rRNA structures from forming. Promotes peptidyl transferase center (PTC) maturation. In Burkholderia ambifaria (strain MC40-6), this protein is Dual-action ribosomal maturation protein DarP.